We begin with the raw amino-acid sequence, 194 residues long: HTH-type transcriptional regulator BetI (194 aa).

Residues 8-68 (EIRRAQLIDA…ATMRHVLRDL (61 aa)) form the HTH tetR-type domain. Residues 31 to 50 (TLASVAQRANISTGIVSHYF) constitute a DNA-binding region (H-T-H motif).

Its pathway is amine and polyamine biosynthesis; betaine biosynthesis via choline pathway [regulation]. Repressor involved in the biosynthesis of the osmoprotectant glycine betaine. It represses transcription of the choline transporter BetT and the genes of BetAB involved in the synthesis of glycine betaine. This Burkholderia cenocepacia (strain ATCC BAA-245 / DSM 16553 / LMG 16656 / NCTC 13227 / J2315 / CF5610) (Burkholderia cepacia (strain J2315)) protein is HTH-type transcriptional regulator BetI.